Reading from the N-terminus, the 21-residue chain is Outer membrane protein P2 (21 aa).

As to quaternary structure, disulfide bond interactions within and between MOMP molecules and other components form high molecular-weight oligomers.

The protein localises to the cell outer membrane. Its function is as follows. Structural rigidity of the outer membrane of elementary bodies and porin forming, permitting diffusion of solutes through the intracellular reticulate body membrane. Binds carcinoembryonic antigen (CEA). This is Outer membrane protein P2 from Glaesserella parasuis (Haemophilus parasuis).